Here is a 299-residue protein sequence, read N- to C-terminus: Pyridoxal 5'-phosphate synthase subunit PdxS (299 aa).

Asp24 contacts D-ribose 5-phosphate. The active-site Schiff-base intermediate with D-ribose 5-phosphate is Lys81. Gly153 serves as a coordination point for D-ribose 5-phosphate. Arg165 serves as a coordination point for D-glyceraldehyde 3-phosphate. Residues Gly219 and Gly240–Ser241 each bind D-ribose 5-phosphate.

The protein belongs to the PdxS/SNZ family. In terms of assembly, in the presence of PdxT, forms a dodecamer of heterodimers.

The catalysed reaction is aldehydo-D-ribose 5-phosphate + D-glyceraldehyde 3-phosphate + L-glutamine = pyridoxal 5'-phosphate + L-glutamate + phosphate + 3 H2O + H(+). The protein operates within cofactor biosynthesis; pyridoxal 5'-phosphate biosynthesis. Catalyzes the formation of pyridoxal 5'-phosphate from ribose 5-phosphate (RBP), glyceraldehyde 3-phosphate (G3P) and ammonia. The ammonia is provided by the PdxT subunit. Can also use ribulose 5-phosphate and dihydroxyacetone phosphate as substrates, resulting from enzyme-catalyzed isomerization of RBP and G3P, respectively. The chain is Pyridoxal 5'-phosphate synthase subunit PdxS from Methanococcus maripaludis (strain C6 / ATCC BAA-1332).